The primary structure comprises 212 residues: Probable GTP-binding protein EngB (212 aa).

The 173-residue stretch at 38 to 210 (SLPEIAFVGK…KASLAKCIKP (173 aa)) folds into the EngB-type G domain. Residues 46-53 (GKSNVGKS), 73-77 (GRTRQ), 91-94 (DLPG), 158-161 (TKSD), and 189-191 (VSN) each bind GTP. Mg(2+) is bound by residues S53 and T75.

The protein belongs to the TRAFAC class TrmE-Era-EngA-EngB-Septin-like GTPase superfamily. EngB GTPase family. Mg(2+) is required as a cofactor.

Necessary for normal cell division and for the maintenance of normal septation. The sequence is that of Probable GTP-binding protein EngB from Rickettsia peacockii (strain Rustic).